Reading from the N-terminus, the 3646-residue chain is Platelet adherence protein A (3646 aa).

An N-terminal signal peptide occupies residues Met1–Ala33. Residues Asp34–Gln359 form a does not bind platelets region. The F2, binds platelets, fibronectin, vitronectin, salivary pellicle, causes ADP secretion by dense granules stretch occupies residues Asp34–Asp690. Residues Asp34 to Glu1328 are binds platelets. The VWFA domain occupies Asp75–Val373. An Integrin-like recognition motif NGR motif is present at residues Asn214 to Arg216. Positions Arg416 to Thr418 match the Integrin-like recognition motif RGT motif. Residues Lys439–Asn466 form a disordered region. The span at Asp445–Glu454 shows a compositional bias: basic and acidic residues. The short motif at Ala485–Asp487 is the Integrin-like recognition motif AGD element. A central region with RrgB repeats region spans residues Thr709–Phe3205. Composition is skewed to basic and acidic residues over residues Lys1124 to Thr1135 and Asp1563 to Asn1573. Disordered stretches follow at residues Lys1124–Asn1153, Asp1563–Lys1589, Phe2011–Leu2036, Glu2170–Ala2198, Lys2320–Glu2343, Pro2467–Lys2492, Ala2611–Lys2644, Phe2767–Leu2792, Pro2916–Pro2948, Thr3202–Thr3252, Ala3371–Glu3412, and Asn3550–Gly3618. Positions Phe2011–Lys2022 are enriched in polar residues. Residues Phe2767–Lys2778 are compositionally biased toward polar residues. Residues Gly3210–Val3220 are compositionally biased toward polar residues. Residues Arg3223 to Glu3237 are compositionally biased toward basic and acidic residues. 2 coiled-coil regions span residues Ile3326–Lys3376 and Val3408–Lys3475. Over residues Ala3371–Ala3406 the composition is skewed to low complexity. The span at Asn3550–Asn3560 shows a compositional bias: polar residues. Residues Pro3563–Pro3605 show a composition bias toward pro residues. The short motif at Leu3614–Gly3618 is the LPXTG sorting signal element. Residue Thr3617 is modified to Pentaglycyl murein peptidoglycan amidated threonine. The propeptide at Gly3618–His3646 is removed by sortase.

The protein localises to the secreted. It localises to the cell wall. With respect to regulation, whole bacterial adhesion to Chinese hamster ovary cells expressing GPIIbIIIa is abrogated by integrin inhibitor RGDS and GPIIbIIIa inhibitor Abciximab. A cell wall protein involved with Hsa in host cell interactions required for colonization and pathogenesis. Involved in recognition of platelets. Interacts with human platelet integrin receptor GPIIbIIIa (a complex of ITGA2B and ITGB3). Involved in platelet spreading, presumably by activation of outside-in signaling leading to platelet activation and then spreading. Spreading also involves GPIIbIIIa. Binding to platelets under static conditions causes platelet dense granules to secrete ADP (similar to release induced by fibrinogen binding), has no effect on platelet alpha granule release. The N-terminal 656 aa residue fragment (called F2) also binds platelets, causes dense granule secretion and allows platelet spreading. Acts in concert with Hsa to promote binding to human fibronectin (FN1) and vitronectin (VTN), and biofilm formation. F2 bind activated platelets more strongly than unactivated platelets. Binding to both FN1 and VTN is mediated at least in part by their glycosylation. The chain is Platelet adherence protein A from Streptococcus gordonii (strain Challis / ATCC 35105 / BCRC 15272 / CH1 / DL1 / V288).